Reading from the N-terminus, the 362-residue chain is Peptide chain release factor 1 (362 aa).

An N5-methylglutamine modification is found at Q236.

It belongs to the prokaryotic/mitochondrial release factor family. Post-translationally, methylated by PrmC. Methylation increases the termination efficiency of RF1.

It localises to the cytoplasm. Peptide chain release factor 1 directs the termination of translation in response to the peptide chain termination codons UAG and UAA. In Lactobacillus helveticus (strain DPC 4571), this protein is Peptide chain release factor 1.